Consider the following 323-residue polypeptide: ADP-L-glycero-D-manno-heptose-6-epimerase (323 aa).

NADP(+)-binding positions include 10-11, 31-32, lysine 38, arginine 53, 75-79, and asparagine 92; these read FI, DN, and MGACS. The active-site Proton acceptor is tyrosine 143. Lysine 147 is an NADP(+) binding site. Asparagine 170 contributes to the substrate binding site. Residues valine 171 and lysine 179 each contribute to the NADP(+) site. The active-site Proton acceptor is the lysine 179. Substrate is bound by residues aspartate 181, lysine 188, 202 to 205, arginine 216, and tyrosine 281; that span reads FRSC.

This sequence belongs to the NAD(P)-dependent epimerase/dehydratase family. HldD subfamily. In terms of assembly, homopentamer. Requires NADP(+) as cofactor.

The catalysed reaction is ADP-D-glycero-beta-D-manno-heptose = ADP-L-glycero-beta-D-manno-heptose. The protein operates within nucleotide-sugar biosynthesis; ADP-L-glycero-beta-D-manno-heptose biosynthesis; ADP-L-glycero-beta-D-manno-heptose from D-glycero-beta-D-manno-heptose 7-phosphate: step 4/4. Catalyzes the interconversion between ADP-D-glycero-beta-D-manno-heptose and ADP-L-glycero-beta-D-manno-heptose via an epimerization at carbon 6 of the heptose. This is ADP-L-glycero-D-manno-heptose-6-epimerase from Nitratidesulfovibrio vulgaris (strain DP4) (Desulfovibrio vulgaris).